The following is a 553-amino-acid chain: Methyl-coenzyme M reductase II subunit alpha (553 aa).

Position 150 (Gln150) interacts with coenzyme F430. Residues Arg228, Lys259–His260, and Arg273 each bind coenzyme B. His260 is subject to Pros-methylhistidine. A 5-methylarginine modification is found at Arg274. Tyr335 lines the coenzyme M pocket. Gln402 is modified (2-methylglutamine). Residue Tyr446 participates in coenzyme M binding. Gly447 bears the 1-thioglycine mark. Residue Asp452 is modified to (Z)-2,3-didehydroaspartate. Cys454 carries the S-methylcysteine modification.

Belongs to the methyl-coenzyme M reductase alpha subunit family. As to quaternary structure, MCR is a hexamer of two alpha, two beta, and two gamma chains, forming a dimer of heterotrimers. Coenzyme F430 is required as a cofactor. The alpha subunit contains six modified amino acids near the active site region. Is methylated on His-260, Arg-274, Gln-402 and Cys-454, probably by the action of specific S-adenosylmethionine-dependent methyltransferases. Also contains a thioglycine at position 447, forming a thiopeptide bond. Contains a didehydroaspartate residue at position 452. The methylation on C5 of Arg-274 is a post-translational methylation not essential in vivo, but which plays a role for the stability and structural integrity of MCR.

It carries out the reaction coenzyme B + methyl-coenzyme M = methane + coenzyme M-coenzyme B heterodisulfide. It functions in the pathway one-carbon metabolism; methyl-coenzyme M reduction; methane from methyl-coenzyme M: step 1/1. In terms of biological role, component of the methyl-coenzyme M reductase (MCR) I that catalyzes the reductive cleavage of methyl-coenzyme M (CoM-S-CH3 or 2-(methylthio)ethanesulfonate) using coenzyme B (CoB or 7-mercaptoheptanoylthreonine phosphate) as reductant which results in the production of methane and the mixed heterodisulfide of CoB and CoM (CoM-S-S-CoB). This is the final step in methanogenesis. In Methanothermobacter thermautotrophicus (strain ATCC 29096 / DSM 1053 / JCM 10044 / NBRC 100330 / Delta H) (Methanobacterium thermoautotrophicum), this protein is Methyl-coenzyme M reductase II subunit alpha (mrtA).